Consider the following 425-residue polypeptide: Serine--tRNA ligase (425 aa).

231–233 contacts L-serine; the sequence is TAE. 262–264 lines the ATP pocket; it reads RSE. Position 285 (Glu285) interacts with L-serine. ATP is bound at residue 349-352; that stretch reads EISS. Ser385 contacts L-serine.

This sequence belongs to the class-II aminoacyl-tRNA synthetase family. Type-1 seryl-tRNA synthetase subfamily. Homodimer. The tRNA molecule binds across the dimer.

It is found in the cytoplasm. It catalyses the reaction tRNA(Ser) + L-serine + ATP = L-seryl-tRNA(Ser) + AMP + diphosphate + H(+). It carries out the reaction tRNA(Sec) + L-serine + ATP = L-seryl-tRNA(Sec) + AMP + diphosphate + H(+). The protein operates within aminoacyl-tRNA biosynthesis; selenocysteinyl-tRNA(Sec) biosynthesis; L-seryl-tRNA(Sec) from L-serine and tRNA(Sec): step 1/1. Catalyzes the attachment of serine to tRNA(Ser). Is also able to aminoacylate tRNA(Sec) with serine, to form the misacylated tRNA L-seryl-tRNA(Sec), which will be further converted into selenocysteinyl-tRNA(Sec). The polypeptide is Serine--tRNA ligase (Bartonella henselae (strain ATCC 49882 / DSM 28221 / CCUG 30454 / Houston 1) (Rochalimaea henselae)).